We begin with the raw amino-acid sequence, 61 residues long: Three-finger hemachatoxin (61 aa).

Cystine bridges form between cysteine 3–cysteine 22, cysteine 15–cysteine 39, cysteine 43–cysteine 54, and cysteine 55–cysteine 60.

Belongs to the three-finger toxin family. Short-chain subfamily. Type IB cytotoxin sub-subfamily. Expressed by the venom gland.

The protein resides in the secreted. This protein lyses red blood cells and has cardiotoxic and hypotensive activities. This chain is Three-finger hemachatoxin, found in Hemachatus haemachatus (Rinkhals).